Reading from the N-terminus, the 138-residue chain is Large ribosomal subunit protein uL16 (138 aa).

Belongs to the universal ribosomal protein uL16 family. In terms of assembly, part of the 50S ribosomal subunit.

Its function is as follows. Binds 23S rRNA and is also seen to make contacts with the A and possibly P site tRNAs. This is Large ribosomal subunit protein uL16 from Acidiphilium cryptum (strain JF-5).